The chain runs to 191 residues: GDP-mannose pyrophosphatase (191 aa).

GDP-alpha-D-mannose contacts are provided by residues tyrosine 17, 38–40 (KRE), arginine 67, and 85–87 (AGL). Positions 43–180 (DRGNGATILL…EIRDGKTVLL (138 aa)) constitute a Nudix hydrolase domain. Mg(2+) is bound by residues alanine 85, glutamate 100, and glutamate 104. The short motif at 86 to 106 (GLLDNDEPEACIRKEAIEETG) is the Nudix box element. GDP-alpha-D-mannose contacts are provided by residues glutamate 104, glutamate 127, 150–151 (DE), and lysine 176. Glutamate 151 is a Mg(2+) binding site.

This sequence belongs to the Nudix hydrolase family. NudK subfamily. Homodimer. The cofactor is Mg(2+).

The enzyme catalyses GDP-alpha-D-mannose + H2O = alpha-D-mannose 1-phosphate + GMP + 2 H(+). Nucleoside diphosphate sugar hydrolase that hydrolyzes GDP-mannose as its preferred substrate, yielding GMP and mannose-1-phosphate. The protein is GDP-mannose pyrophosphatase (nudK) of Citrobacter koseri (strain ATCC BAA-895 / CDC 4225-83 / SGSC4696).